The following is a 151-amino-acid chain: Large ribosomal subunit protein uL13 (151 aa).

Positions Pro129–Ser151 are disordered. Basic and acidic residues predominate over residues His131–Glu140.

It belongs to the universal ribosomal protein uL13 family. In terms of assembly, part of the 50S ribosomal subunit.

Functionally, this protein is one of the early assembly proteins of the 50S ribosomal subunit, although it is not seen to bind rRNA by itself. It is important during the early stages of 50S assembly. This chain is Large ribosomal subunit protein uL13, found in Trichormus variabilis (strain ATCC 29413 / PCC 7937) (Anabaena variabilis).